The following is a 49-amino-acid chain: Large ribosomal subunit protein bL32 (49 aa).

It belongs to the bacterial ribosomal protein bL32 family.

In Nitratiruptor sp. (strain SB155-2), this protein is Large ribosomal subunit protein bL32.